A 155-amino-acid polypeptide reads, in one-letter code: MSTKNPSEMPRILVLHGPNLNLLGTREPQHYGADTLDAINARLVARAAASGVACDTFQSNAEYRLIERIHDARTDGTGFIVINPAAFTHTSVALRDALAAVDLPFVEVHLSNVYKREPFRHHSYFSDLAVGVICGLGARGYDHALEHALDTLTAS.

Tyrosine 31 (proton acceptor) is an active-site residue. Substrate contacts are provided by asparagine 83, histidine 89, and aspartate 96. Residue histidine 109 is the Proton donor of the active site. Residues 110–111 (LS) and arginine 120 each bind substrate.

Belongs to the type-II 3-dehydroquinase family. In terms of assembly, homododecamer.

It carries out the reaction 3-dehydroquinate = 3-dehydroshikimate + H2O. It participates in metabolic intermediate biosynthesis; chorismate biosynthesis; chorismate from D-erythrose 4-phosphate and phosphoenolpyruvate: step 3/7. In terms of biological role, catalyzes a trans-dehydration via an enolate intermediate. This Laribacter hongkongensis (strain HLHK9) protein is 3-dehydroquinate dehydratase.